We begin with the raw amino-acid sequence, 107 residues long: MPGGYGVMGDDGAMDYSVHEAWNEATNVYLVVILVSFGLFMYAKRNKRKIMRIFSLPPPAETLSEPNFYDTISKIRLRQQLEMYSISRKYDYQQPQSQADSVQLSLE.

The chain crosses the membrane as a helical span at residues glutamate 20–tyrosine 42.

This sequence belongs to the SMIM19 family.

It localises to the membrane. The protein is Small integral membrane protein 19 (SMIM19) of Bos taurus (Bovine).